The chain runs to 272 residues: Glutamate racemase (272 aa).

Residues 10–11 (DS) and 42–43 (YG) each bind substrate. Cysteine 74 functions as the Proton donor/acceptor in the catalytic mechanism. A substrate-binding site is contributed by 75–76 (NT). Cysteine 185 (proton donor/acceptor) is an active-site residue. 186 to 187 (TH) lines the substrate pocket.

Belongs to the aspartate/glutamate racemases family.

The enzyme catalyses L-glutamate = D-glutamate. It functions in the pathway cell wall biogenesis; peptidoglycan biosynthesis. Its function is as follows. Provides the (R)-glutamate required for cell wall biosynthesis. This chain is Glutamate racemase, found in Bacillus velezensis (strain DSM 23117 / BGSC 10A6 / LMG 26770 / FZB42) (Bacillus amyloliquefaciens subsp. plantarum).